Consider the following 524-residue polypeptide: MNLFVALSKKKKYQHKLFAPYLRPSTDTTTTETRFMLSTCLIRNCVFIRPRLSVICFKAIRYQSKKSDFPDYTKINDPKLREIIEGSNFGTEAILKKQREDQDKKKKMEQERKRLEQEREVDRRREEKRAKEESESNKTDNDNEANQHTDDKLAKVNEKLESNFSKTESGKLRGEDTGTRETVVETEEEEELKLKAENKIIATSKDSVDESDIPNLAKEINETIQKEIAGLPSQKAKNQSKLAKNLTKYLDSAHDTILTATRALNDVTGYSAIEKLKKSIETQEDDLKKAKEKVKQCKIAYGEAIQRRSHSQREVNELLTRKHNWSSNDLERFTELYRNDHENEIHEQEAEKKLDEAESKVDGVQLKLTQSILTRYHEEQIWSDKIRRSSTWGTWVLMGLNVLLFVVATFIVEPWKRSKLVSAFEDKVKQVLVGISQENEQILDPIIEKLEPTDGQVPIKTSFDFKFVTNTWHGLKAALVRNYEALMSPEITNLEFDKFEFELFTMTVAIVAFSMGSLIVSLFK.

Positions glutamate 92–glutamate 133 form a coiled coil. Composition is skewed to basic and acidic residues over residues isoleucine 94–glutamate 161 and glutamate 168–valine 183. Positions isoleucine 94–glutamate 190 are disordered. Coiled coils occupy residues tyrosine 270–alanine 304 and arginine 338–serine 371. A helical membrane pass occupies residues tryptophan 392 to valine 412. Residues glutamate 413–glutamate 502 are Mitochondrial intermembrane-facing. The helical transmembrane segment at leucine 503–phenylalanine 523 threads the bilayer. Residue lysine 524 is a topological domain, mitochondrial matrix.

This sequence belongs to the SHE9 family. In terms of assembly, homooligomer.

It is found in the mitochondrion inner membrane. Required for the maintenance of the structure of the mitochondrial inner membrane. Involved in mitochondrial morphology. Causes growth arrest when highly overexpressed. This Candida albicans (strain SC5314 / ATCC MYA-2876) (Yeast) protein is Sensitive to high expression protein 9 homolog, mitochondrial (SHE9).